We begin with the raw amino-acid sequence, 720 residues long: 1,4-alpha-glucan branching enzyme GlgB (720 aa).

Aspartate 400 functions as the Nucleophile in the catalytic mechanism. Catalysis depends on glutamate 453, which acts as the Proton donor.

Belongs to the glycosyl hydrolase 13 family. GlgB subfamily. As to quaternary structure, monomer.

It catalyses the reaction Transfers a segment of a (1-&gt;4)-alpha-D-glucan chain to a primary hydroxy group in a similar glucan chain.. Its pathway is glycan biosynthesis; glycogen biosynthesis. In terms of biological role, catalyzes the formation of the alpha-1,6-glucosidic linkages in glycogen by scission of a 1,4-alpha-linked oligosaccharide from growing alpha-1,4-glucan chains and the subsequent attachment of the oligosaccharide to the alpha-1,6 position. In Chlamydia pneumoniae (Chlamydophila pneumoniae), this protein is 1,4-alpha-glucan branching enzyme GlgB.